Here is a 307-residue protein sequence, read N- to C-terminus: Manganese-dependent inorganic pyrophosphatase (307 aa).

Mn(2+) is bound by residues H7, D11, D13, D66, H88, and D147.

Requires Mn(2+) as cofactor.

Its subcellular location is the cytoplasm. It carries out the reaction diphosphate + H2O = 2 phosphate + H(+). This chain is Manganese-dependent inorganic pyrophosphatase (ppaC), found in Methanocaldococcus jannaschii (strain ATCC 43067 / DSM 2661 / JAL-1 / JCM 10045 / NBRC 100440) (Methanococcus jannaschii).